Here is a 352-residue protein sequence, read N- to C-terminus: Biotin synthase (352 aa).

In terms of domain architecture, Radical SAM core spans 44 to 262 (NRVQVSTLLS…LAVARIMMPK (219 aa)). Residues cysteine 59, cysteine 63, and cysteine 66 each coordinate [4Fe-4S] cluster. Cysteine 103, cysteine 134, cysteine 194, and arginine 266 together coordinate [2Fe-2S] cluster.

The protein belongs to the radical SAM superfamily. Biotin synthase family. Homodimer. Requires [4Fe-4S] cluster as cofactor. [2Fe-2S] cluster is required as a cofactor.

It carries out the reaction (4R,5S)-dethiobiotin + (sulfur carrier)-SH + 2 reduced [2Fe-2S]-[ferredoxin] + 2 S-adenosyl-L-methionine = (sulfur carrier)-H + biotin + 2 5'-deoxyadenosine + 2 L-methionine + 2 oxidized [2Fe-2S]-[ferredoxin]. Its pathway is cofactor biosynthesis; biotin biosynthesis; biotin from 7,8-diaminononanoate: step 2/2. Its function is as follows. Catalyzes the conversion of dethiobiotin (DTB) to biotin by the insertion of a sulfur atom into dethiobiotin via a radical-based mechanism. The sequence is that of Biotin synthase from Ectopseudomonas mendocina (strain ymp) (Pseudomonas mendocina).